Reading from the N-terminus, the 239-residue chain is uncharacterized protein (239 aa).

The next 8 helical transmembrane spans lie at 4-24 (LIPKQHGAWAMLLIPFLLGMV), 29-49 (VIWHIPLFLGWLFLYLAVYPV), 61-81 (YQKWMCYYGFPTCCFLMISVF), 84-104 (PPLIWVGVSLLPLFLIHMYFA), 116-136 (VAGVLFFCSGGFASCWLGMGT), 139-159 (GWAWFIFLQSALFFIGSSFYV), 180-200 (LLLPFLSALFGAGWAFLAFIP), and 218-238 (IGILEIVNACFFLAVMCLFIT).

This sequence to H.influenzae HI_1626.

The protein localises to the cell membrane. This is an uncharacterized protein from Bacillus subtilis (strain 168).